A 247-amino-acid polypeptide reads, in one-letter code: Probable transcriptional regulatory protein Dvul_0986 (247 aa).

The interval M1–G22 is disordered.

Belongs to the TACO1 family.

The protein localises to the cytoplasm. In Nitratidesulfovibrio vulgaris (strain DP4) (Desulfovibrio vulgaris), this protein is Probable transcriptional regulatory protein Dvul_0986.